Here is a 368-residue protein sequence, read N- to C-terminus: Protein PXR1 (368 aa).

A disordered region spans residues 1–24 (MGLAGAKNKRKLGNDPNNTKWSRN). Positions 15–24 (DPNNTKWSRN) are enriched in polar residues. Positions 25-79 (TDTFGQKILRAQGWQPGEYLGAKDAAHAEWHTEANTTHIRVTLKDDTLGLGAKRN) constitute a G-patch domain. The disordered stretch occupies residues 144–337 (TPDEEAEEIP…GYSTPIPTGS (194 aa)). Residues 176–186 (RRSDKEDDKLG) are compositionally biased toward basic and acidic residues. 2 stretches are compositionally biased toward basic residues: residues 187–196 (KKEKKSKKRK) and 257–277 (DKKRDKKEKKERRDKKEKKEK). A compositionally biased stretch (low complexity) spans 310–337 (PSSAPTPTDSNSSTPTGSGYSTPIPTGS).

Belongs to the PINX1 family.

It is found in the nucleus. It localises to the nucleolus. Its function is as follows. Involved in rRNA-processing at A0, A1 and A2 sites and negatively regulates telomerase. The polypeptide is Protein PXR1 (PXR1) (Chaetomium globosum (strain ATCC 6205 / CBS 148.51 / DSM 1962 / NBRC 6347 / NRRL 1970) (Soil fungus)).